Here is a 469-residue protein sequence, read N- to C-terminus: 3-isopropylmalate dehydratase large subunit (469 aa).

The [4Fe-4S] cluster site is built by cysteine 350, cysteine 410, and cysteine 413.

The protein belongs to the aconitase/IPM isomerase family. LeuC type 1 subfamily. Heterodimer of LeuC and LeuD. [4Fe-4S] cluster serves as cofactor.

It catalyses the reaction (2R,3S)-3-isopropylmalate = (2S)-2-isopropylmalate. The protein operates within amino-acid biosynthesis; L-leucine biosynthesis; L-leucine from 3-methyl-2-oxobutanoate: step 2/4. In terms of biological role, catalyzes the isomerization between 2-isopropylmalate and 3-isopropylmalate, via the formation of 2-isopropylmaleate. The protein is 3-isopropylmalate dehydratase large subunit of Allorhizobium ampelinum (strain ATCC BAA-846 / DSM 112012 / S4) (Agrobacterium vitis (strain S4)).